Reading from the N-terminus, the 244-residue chain is Protein crossbronx (244 aa).

The UBC core domain maps to 20 to 176 (QQEYKILAEY…VQENIKESKE (157 aa)). The tract at residues 209 to 244 (AGRSKQTEPSAQQGNGGHATGLSWVKEGEFKPLSIE) is disordered.

This sequence belongs to the ubiquitin-conjugating enzyme family. FTS subfamily.

The polypeptide is Protein crossbronx (cbx) (Drosophila simulans (Fruit fly)).